We begin with the raw amino-acid sequence, 358 residues long: Probable translocation protein Y4yK (358 aa).

The protein belongs to the FliN/MopA/SpaO family.

Could be involved in the secretion of an unknown factor. The polypeptide is Probable translocation protein Y4yK (Sinorhizobium fredii (strain NBRC 101917 / NGR234)).